Here is a 245-residue protein sequence, read N- to C-terminus: 1-(5-phosphoribosyl)-5-[(5-phosphoribosylamino)methylideneamino] imidazole-4-carboxamide isomerase (245 aa).

The active-site Proton acceptor is D10. D129 acts as the Proton donor in catalysis.

The protein belongs to the HisA/HisF family.

Its subcellular location is the cytoplasm. The catalysed reaction is 1-(5-phospho-beta-D-ribosyl)-5-[(5-phospho-beta-D-ribosylamino)methylideneamino]imidazole-4-carboxamide = 5-[(5-phospho-1-deoxy-D-ribulos-1-ylimino)methylamino]-1-(5-phospho-beta-D-ribosyl)imidazole-4-carboxamide. It participates in amino-acid biosynthesis; L-histidine biosynthesis; L-histidine from 5-phospho-alpha-D-ribose 1-diphosphate: step 4/9. In Parafrankia sp. (strain EAN1pec), this protein is 1-(5-phosphoribosyl)-5-[(5-phosphoribosylamino)methylideneamino] imidazole-4-carboxamide isomerase.